The sequence spans 475 residues: Aspartyl/glutamyl-tRNA(Asn/Gln) amidotransferase subunit B (475 aa).

This sequence belongs to the GatB/GatE family. GatB subfamily. As to quaternary structure, heterotrimer of A, B and C subunits.

The catalysed reaction is L-glutamyl-tRNA(Gln) + L-glutamine + ATP + H2O = L-glutaminyl-tRNA(Gln) + L-glutamate + ADP + phosphate + H(+). It catalyses the reaction L-aspartyl-tRNA(Asn) + L-glutamine + ATP + H2O = L-asparaginyl-tRNA(Asn) + L-glutamate + ADP + phosphate + 2 H(+). Functionally, allows the formation of correctly charged Asn-tRNA(Asn) or Gln-tRNA(Gln) through the transamidation of misacylated Asp-tRNA(Asn) or Glu-tRNA(Gln) in organisms which lack either or both of asparaginyl-tRNA or glutaminyl-tRNA synthetases. The reaction takes place in the presence of glutamine and ATP through an activated phospho-Asp-tRNA(Asn) or phospho-Glu-tRNA(Gln). This chain is Aspartyl/glutamyl-tRNA(Asn/Gln) amidotransferase subunit B, found in Clostridium novyi (strain NT).